The primary structure comprises 226 residues: Ribonuclease 3 (226 aa).

Residues 5 to 127 (IFQRGDPIGH…IVAAIYLDCG (123 aa)) form the RNase III domain. Glu40 contacts Mg(2+). Asp44 is a catalytic residue. Mg(2+)-binding residues include Asp113 and Glu116. Residue Glu116 is part of the active site. One can recognise a DRBM domain in the interval 154–224 (DPKTRLQEWL…ATLVIAQLDS (71 aa)).

This sequence belongs to the ribonuclease III family. As to quaternary structure, homodimer. Mg(2+) serves as cofactor.

It localises to the cytoplasm. It carries out the reaction Endonucleolytic cleavage to 5'-phosphomonoester.. Functionally, digests double-stranded RNA. Involved in the processing of primary rRNA transcript to yield the immediate precursors to the large and small rRNAs (23S and 16S). Processes some mRNAs, and tRNAs when they are encoded in the rRNA operon. Processes pre-crRNA and tracrRNA of type II CRISPR loci if present in the organism. This is Ribonuclease 3 from Xanthomonas oryzae pv. oryzae (strain KACC10331 / KXO85).